Reading from the N-terminus, the 88-residue chain is Large ribosomal subunit protein bL31B (88 aa).

It belongs to the bacterial ribosomal protein bL31 family. Type B subfamily. As to quaternary structure, part of the 50S ribosomal subunit.

This is Large ribosomal subunit protein bL31B from Burkholderia orbicola (strain MC0-3).